Consider the following 381-residue polypeptide: MEEDRAILTFHRIPSLNSSLITTSSPAKSGAEQFRRRVLRNPARGDFGLGRFACISLVEKCEQREFAPTTAQLLNNPLAILALVPKDAAIFAAGALAGAAAKTVTAPLDRIKLLMQTHGIRLGQQSAKKAIGFIEAITLIAKEEGVKGYWKGNLPQVIRVLPYSAVQLLAYESYKNLFKGKDDQLSVIGRLAAGACAGMTSTLLTYPLDVLRLRLAVEPGYRTMSQVALSMLRDEGIASFYYGLGPSLVGIAPYIAVNFCIFDLVKKSLPEEYRKKAQSSLLTAVLSAGIATLTCYPLDTVRRQMQMRGTPYKSIPEAFAGIIDRDGLIGLYRGFLPNALKTLPNSSIRLTTFDMVKRLIATSEKQLQKISDDNRNRDQAQ.

The N-terminal 26 residues, 1–26, are a transit peptide targeting the chloroplast; it reads MEEDRAILTFHRIPSLNSSLITTSSP. The next 5 membrane-spanning stretches (helical) occupy residues 78-98, 154-179, 191-211, 237-257, and 281-301; these read LAIL…ALAG, LPQV…NLFK, LAAG…LDVL, IASF…YIAV, and LLTA…LDTV. Solcar repeat units follow at residues 85-177, 185-268, and 279-359; these read PKDA…YKNL, LSVI…VKKS, and SSLL…VKRL. Arg-159 lines the ADP pocket. Residue Arg-302 participates in ADP binding. A helical membrane pass occupies residues 334-360; that stretch reads GFLPNALKTLPNSSIRLTTFDMVKRLI.

Belongs to the mitochondrial carrier (TC 2.A.29) family.

It is found in the plastid. The protein resides in the chloroplast membrane. Functionally, transports adenine nucleotides. The sequence is that of Probable envelope ADP,ATP carrier protein, chloroplastic (EAAC) from Arabidopsis thaliana (Mouse-ear cress).